The sequence spans 410 residues: Histidine--tRNA ligase (410 aa).

This sequence belongs to the class-II aminoacyl-tRNA synthetase family.

Its subcellular location is the cytoplasm. The catalysed reaction is tRNA(His) + L-histidine + ATP = L-histidyl-tRNA(His) + AMP + diphosphate + H(+). The sequence is that of Histidine--tRNA ligase from Methanoculleus marisnigri (strain ATCC 35101 / DSM 1498 / JR1).